Consider the following 334-residue polypeptide: Zinc finger Ran-binding domain-containing protein 2 (334 aa).

2 consecutive RanBP2-type zinc fingers follow at residues 9 to 40 (SDGDWICPDKKCGNVNFARRTSCNRCGREKTT) and 65 to 94 (SANDWQCKTCGNVNWARRSECNMCNTPKYA). A disordered region spans residues 117–334 (REESDGEYDE…SGSRTSSKKK (218 aa)). Residues 150–163 (DKESEGEDEEDEDG) show a composition bias toward acidic residues. Positions 196-212 (KKKKSNRRSRSKSRSSH) are enriched in basic residues. Composition is skewed to low complexity over residues 213–224 (SRSSSRSSSHSS) and 258–285 (SRSSSRSYRGSSTPRKRSYSSSRSSSSP). The span at 302–318 (RKKRRSRSRSPERRRRS) shows a compositional bias: basic residues. Positions 319–334 (SSGSSHSGSRTSSKKK) are enriched in low complexity.

It belongs to the ZRANB2 family.

The protein localises to the nucleus. Functionally, may regulate alternative splicing by interfering with constitutive 5'-splice site selection. The polypeptide is Zinc finger Ran-binding domain-containing protein 2 (Gallus gallus (Chicken)).